The following is an 895-amino-acid chain: MKITEGRFRLSLLLLLLLISAATLISAADYSPTEKILLNCGGGASNLTDTDNRIWISDVKSKFLSSSSEDSKTSPALTQDPSVPEVPYMTARVFRSPFTYTFPVASGRKFVRLYFYPNSYDGLNATNSLFSVSFGPYTLLKNFSASQTAEALTYAFIIKEFVVNVEGGTLNMTFTPESAPSNAYAFVNGIEVTSMPDMYSSTDGTLTMVGSSGSVTIDNSTALENVYRLNVGGNDISPSADTGLYRSWYDDQPYIFGAGLGIPETADPNMTIKYPTGTPTYVAPVDVYSTARSMGPTAQINLNYNLTWIFSIDSGFTYLVRLHFCEVSSNITKINQRVFTIYLNNQTAEPEADVIAWTSSNGVPFHKDYVVNPPEGNGQQDLWLALHPNPVNKPEYYDSLLNGVEIFKMNTSDGNLAGTNPIPGPQVTADPSKVLRPTTRKSKSNTAIIAGAASGAVVLALIIGFCVFGAYRRRKRGDYQPASDATSGWLPLSLYGNSHSAGSAKTNTTGSYASSLPSNLCRHFSFAEIKAATKNFDESRVLGVGGFGKVYRGEIDGGTTKVAIKRGNPMSEQGVHEFQTEIEMLSKLRHRHLVSLIGYCEENCEMILVYDYMAHGTMREHLYKTQNPSLPWKQRLEICIGAARGLHYLHTGAKHTIIHRDVKTTNILLDEKWVAKVSDFGLSKTGPTLDHTHVSTVVKGSFGYLDPEYFRRQQLTEKSDVYSFGVVLFEALCARPALNPTLAKEQVSLAEWAPYCYKKGMLDQIVDPYLKGKITPECFKKFAETAMKCVLDQGIERPSMGDVLWNLEFALQLQESAEENGKGVCGDMDMDEIKYDDGNCKGKNDKSSDVYEGNVTDSRSSGIDMSIGGRSLASEDSDGLTPSAVFSQIMNPKGR.

A signal peptide spans 1–27 (MKITEGRFRLSLLLLLLLISAATLISA). The Extracellular segment spans residues 28-447 (ADYSPTEKIL…TTRKSKSNTA (420 aa)). N-linked (GlcNAc...) asparagine glycans are attached at residues Asn46, Asn124, Asn142, Asn171, Asn219, Asn269, Asn305, Asn330, Asn345, and Asn410. Residues 448–468 (IIAGAASGAVVLALIIGFCVF) traverse the membrane as a helical segment. The Cytoplasmic segment spans residues 469–895 (GAYRRRKRGD…FSQIMNPKGR (427 aa)). The 275-residue stretch at 536–810 (FDESRVLGVG…GDVLWNLEFA (275 aa)) folds into the Protein kinase domain. ATP contacts are provided by residues 542 to 550 (LGVGGFGKV) and Lys565. Residue Asp661 is the Proton acceptor of the active site. The disordered stretch occupies residues 844-895 (NDKSSDVYEGNVTDSRSSGIDMSIGGRSLASEDSDGLTPSAVFSQIMNPKGR). Residues Ser858, Ser866, Ser871, and Ser874 each carry the phosphoserine modification. Residues 884-895 (AVFSQIMNPKGR) are compositionally biased toward polar residues.

This sequence belongs to the protein kinase superfamily. Ser/Thr protein kinase family. As to quaternary structure, interacts with ROPGEF1. Interacts with RALF1; triggering phosphorylation status and subsequent activation. Interacts with LRE and LLG1. Interacts, via its extracellular domain, with FERONIA at the synergid cell surface. Autophosphorylated. Post-translationally, phosphorylated at Ser-858, Ser-871 and Ser-874 upon activation by RALF1. In terms of tissue distribution, expressed in leaves, buds, flowers, siliques, young ovules primordia, and young anthers with immature pollen, but not detected in mature pollen. Highest expression in the synergid cells of the female gametophyte.

It is found in the cell membrane. It catalyses the reaction L-seryl-[protein] + ATP = O-phospho-L-seryl-[protein] + ADP + H(+). The catalysed reaction is L-threonyl-[protein] + ATP = O-phospho-L-threonyl-[protein] + ADP + H(+). Its function is as follows. Receptor-like protein kinase that mediates the female control of male gamete delivery during fertilization, including growth cessation of compatible pollen tubes ensuring a reproductive isolation barriers, by regulating MLO7 subcellular polarization upon pollen tube perception in the female gametophyte synergids. Required for cell elongation during vegetative growth, mostly in a brassinosteroids- (BR-) independent manner. Acts as an upstream regulator for the Rac/Rop-signaling pathway that controls ROS-mediated root hair development. Seems to regulate a cross-talk between brassinosteroids and ethylene signaling pathways during hypocotyl elongation. Negative regulator of brassinosteroid response in light-grown hypocotyls, but required for brassinosteroid response in etiolated seedlings. Mediates sensitivity to powdery mildew (e.g. Golovinomyces orontii). Positive regulator of auxin-promoted growth that represses the abscisic acid (ABA) signaling via the activation of ABI2 phosphatase. Required for RALF1-mediated extracellular alkalinization in a signaling pathway preventing cell expansion. This Arabidopsis thaliana (Mouse-ear cress) protein is Receptor-like protein kinase FERONIA.